We begin with the raw amino-acid sequence, 160 residues long: Serine-protein kinase RsbW (160 aa).

The protein belongs to the anti-sigma-factor family.

The enzyme catalyses L-seryl-[protein] + ATP = O-phospho-L-seryl-[protein] + ADP + H(+). The catalysed reaction is L-threonyl-[protein] + ATP = O-phospho-L-threonyl-[protein] + ADP + H(+). Its function is as follows. Negative regulator of sigma-B activity. Phosphorylates and inactivates its specific antagonist protein, RsbV. Upon phosphorylation of RsbV, RsbW is released and binds to sigma-B, thereby blocking its ability to form an RNA polymerase holoenzyme (E-sigma-B). The chain is Serine-protein kinase RsbW from Bacillus licheniformis.